Consider the following 128-residue polypeptide: Peptidyl-prolyl cis-trans isomerase pin4 (128 aa).

Positions 1–35 (MGKGNAKNSGGGDKKSKAKAGDAKDDSKGKMKGAQ) are disordered. Positions 12 to 29 (GDKKSKAKAGDAKDDSKG) are enriched in basic and acidic residues. The PpiC domain occupies 34-126 (AQSVNVRHIL…YGYHIIMVEG (93 aa)).

This sequence belongs to the PpiC/parvulin rotamase family. PIN4 subfamily.

It catalyses the reaction [protein]-peptidylproline (omega=180) = [protein]-peptidylproline (omega=0). Functionally, PPIases accelerate the folding of proteins. It catalyzes the cis-trans isomerization of proline imidic peptide bonds in oligopeptides. This is Peptidyl-prolyl cis-trans isomerase pin4 (pin4) from Emericella nidulans (strain FGSC A4 / ATCC 38163 / CBS 112.46 / NRRL 194 / M139) (Aspergillus nidulans).